The following is a 252-amino-acid chain: UPF0246 protein FP0718 (252 aa).

Belongs to the UPF0246 family.

The sequence is that of UPF0246 protein FP0718 from Flavobacterium psychrophilum (strain ATCC 49511 / DSM 21280 / CIP 103535 / JIP02/86).